An 870-amino-acid polypeptide reads, in one-letter code: Breast cancer anti-estrogen resistance protein 1 (870 aa).

Methionine 1 is modified (N-acetylmethionine). An SH3 domain is found at 3–65 (HLNVLAKALY…PGNRLKILVG (63 aa)). The disordered stretch occupies residues 70–156 (KPAGPGPGPP…TFSKQTPHHP (87 aa)). Pro residues predominate over residues 73–85 (GPGPGPPATPAQP). The segment covering 97–111 (SQYTPMLPNTYQPQP) has biased composition (polar residues). The interval 115 to 416 (YLVPTPSKAQ…SGVYAVPPPA (302 aa)) is substrate for kinases. Tyrosine 128 is modified (phosphotyrosine; by SRC). 2 positions are modified to phosphoserine: serine 134 and serine 139. The span at 135 to 151 (PQFQSPPAKQTSTFSKQ) shows a compositional bias: polar residues. Position 234 is a phosphotyrosine (tyrosine 234). Tyrosine 249 carries the post-translational modification Phosphotyrosine; by ABL1. Threonine 269 is subject to Phosphothreonine. The residue at position 292 (serine 292) is a Phosphoserine. Phosphotyrosine occurs at positions 362, 372, and 410. Disordered stretches follow at residues 411–449 (AVPPPAEREAPAEGKRLSASSTGSTRSSQSASSLEVAGP), 609–658 (KATA…NSEG), and 715–734 (IDHDLANWTPAQPLAPGRTG). Residues 416–426 (AEREAPAEGKR) show a composition bias toward basic and acidic residues. The segment covering 427–444 (LSASSTGSTRSSQSASSL) has biased composition (low complexity). Phosphoserine occurs at positions 428, 437, and 639. The span at 626–655 (TDKTSSIQSRPLPSPPKFTSQDSPDGQYEN) shows a compositional bias: polar residues. Positions 635–643 (RPLPSPPKF) match the SH3-binding motif. Residues 746–796 (FYLEQCEANLTTLTNAVDAFFTAVATNQPPKIFVAHSKFVILSAHKLVFIG) are divergent helix-loop-helix motif.

The protein belongs to the CAS family. In terms of assembly, forms complexes in vivo with PTK2/FAK1, adapter protein CRKL and LYN kinase. Heterodimerizes with NEDD9. Component of a complex comprised of SH2D3C, BCAR1/CAS, and CRK. Within the complex, interacts with SH2D3C (via C-terminus), and CRK. Part of a complex comprised of PTPRA, BCAR1, BCAR3 (via SH2 domain) and SRC; the formation of the complex is dependent on integrin mediated-tyrosine phosphorylation of PTPRA. Interacts with BCAR3 (via Ras-GEF domain); the interaction regulates adhesion-dependent serine phosphorylation. Interacts with SMAD2 and SMAD3. Interacts with NPHP1. Interacts with PTK2B/PYK2. Interacts (via C-terminus) with SH2D3C/CHAT isoform 2 (via C-terminus). Interacts with activated CSPG4. Interacts with BMX, INPPL1/SHIP2 and PEAK1. Part of a collagen-stimulated complex involved in cell migration made of CDC42, CRK, TNK2 and BCAR1/p130cas. Interacts with TNK2 via SH3 domains. Interacts (when tyrosine-phosphorylated) with tensin TNS1; the interaction is increased by phosphorylation of TNS1. Post-translationally, PTK2/FAK1 activation mediates phosphorylation at the YDYVHL motif; phosphorylation is most likely catalyzed by SRC family members. SRC-family kinases are recruited to the phosphorylated sites and can phosphorylate other tyrosine residues. Tyrosine phosphorylation is triggered by integrin-mediated adhesion of cells to the extracellular matrix. Dephosphorylated by PTPN14 at Tyr-128. In terms of processing, phosphorylated by SRC kinase in a EDN1- and PTK2B-mediated manner; phosphorylation strengthens its interaction with BCAR3 as part of the PTK2B/BCAR1/BCAR3/RAP1 signaling pathway. Expressed in B-cells (at protein level). Widely expressed with an abundant expression in the testis. Low level of expression seen in the liver, thymus, and peripheral blood leukocytes.

The protein localises to the cell junction. It localises to the focal adhesion. Its subcellular location is the cytoplasm. It is found in the cell projection. The protein resides in the axon. Its function is as follows. Docking protein which plays a central coordinating role for tyrosine kinase-based signaling related to cell adhesion. Implicated in induction of cell migration and cell branching. Involved in the BCAR3-mediated inhibition of TGFB signaling. The chain is Breast cancer anti-estrogen resistance protein 1 (BCAR1) from Homo sapiens (Human).